Consider the following 248-residue polypeptide: Coenzyme F420:L-glutamate ligase (248 aa).

GTP-binding positions include 15-18 (IPLI), 45-46 (ET), and Lys-50. Asp-115 serves as a coordination point for a divalent metal cation. A GTP-binding site is contributed by Asn-118. A divalent metal cation is bound by residues Asp-155, Ser-156, and Gln-213. Position 211–218 (211–218 (MGQSDEGI)) interacts with GTP.

Belongs to the CofE family. Homodimer. Requires Mg(2+) as cofactor. The cofactor is Mn(2+). K(+) serves as cofactor.

It carries out the reaction oxidized coenzyme F420-0 + GTP + L-glutamate = oxidized coenzyme F420-1 + GDP + phosphate + H(+). It catalyses the reaction oxidized coenzyme F420-1 + GTP + L-glutamate = oxidized coenzyme F420-2 + GDP + phosphate + H(+). Its pathway is cofactor biosynthesis; coenzyme F420 biosynthesis. In terms of biological role, catalyzes the GTP-dependent successive addition of two or more gamma-linked L-glutamates to the L-lactyl phosphodiester of 7,8-didemethyl-8-hydroxy-5-deazariboflavin (F420-0) to form coenzyme F420-0-glutamyl-glutamate (F420-2) or polyglutamated F420 derivatives. The sequence is that of Coenzyme F420:L-glutamate ligase from Methanococcus maripaludis (strain C6 / ATCC BAA-1332).